Consider the following 1274-residue polypeptide: Clustered mitochondria protein homolog (1274 aa).

The tract at residues 1–53 is disordered; that stretch reads MAQTNGELEHSKGMSSPAVRISQAQKSTKLTVDPESPEQVANGTHAEGEQPEE. TPR repeat units lie at residues 293–326, 510–543, and 628–661; these read SPSF…PNNP, DYGG…KKHP, and AKEA…ERVD. Residues 342–586 form the Clu domain; it reads DITRSQENYL…RVTPLDVMWQ (245 aa). 2 disordered regions span residues 631–655 and 893–925; these read AAKK…EEAL and VSNG…ARAA. 4 TPR repeats span residues 998-1031, 1040-1073, 1082-1115, and 1124-1157; these read AKLY…TERT, ILSY…WKII, ITTM…CESL, and ATIL…FLQQ. The segment at 1197-1274 is disordered; it reads INMTPRTLGT…KLRGSKKSSA (78 aa). The span at 1200–1217 shows a compositional bias: polar residues; sequence TPRTLGTRVQPQVGQTAP.

This sequence belongs to the CLU family. As to quaternary structure, may associate with the eukaryotic translation initiation factor 3 (eIF-3) complex.

The protein resides in the cytoplasm. In terms of biological role, mRNA-binding protein involved in proper cytoplasmic distribution of mitochondria. This is Clustered mitochondria protein homolog from Aspergillus terreus (strain NIH 2624 / FGSC A1156).